The chain runs to 513 residues: Xylose import ATP-binding protein XylG (513 aa).

ABC transporter domains lie at 5-242 (LEMK…VERE) and 259-505 (LRIE…LRSE). Residue 37–44 (GENGSGKS) coordinates ATP.

The protein belongs to the ABC transporter superfamily. Xylose importer (TC 3.A.1.2.4) family. As to quaternary structure, the complex is composed of two ATP-binding proteins (XylG), two transmembrane proteins (XylH) and a solute-binding protein (XylF).

It localises to the cell inner membrane. The catalysed reaction is D-xylose(out) + ATP + H2O = D-xylose(in) + ADP + phosphate + H(+). Part of the ABC transporter complex XylFGH involved in xylose import. Responsible for energy coupling to the transport system. The polypeptide is Xylose import ATP-binding protein XylG (Shigella flexneri).